The following is a 65-amino-acid chain: MPKMKTNRGAAKRFKKTGSGRFKCKHNHLRHILTKKSSKRKRQLGPKFFVSAADHKRVVACLPYA.

The protein belongs to the bacterial ribosomal protein bL35 family.

The chain is Large ribosomal subunit protein bL35 from Aeromonas hydrophila subsp. hydrophila (strain ATCC 7966 / DSM 30187 / BCRC 13018 / CCUG 14551 / JCM 1027 / KCTC 2358 / NCIMB 9240 / NCTC 8049).